We begin with the raw amino-acid sequence, 340 residues long: Putative pyridoxal kinase C18.10 (340 aa).

The substrate site is built by serine 19 and tyrosine 130. ATP contacts are provided by residues 189–190 (TS) and 218–230 (QFPSLSGVFTGTG). Aspartate 231 serves as a coordination point for substrate.

It belongs to the pyridoxine kinase family. The cofactor is a divalent metal cation.

Its subcellular location is the cytoplasm. The protein localises to the nucleus. The catalysed reaction is pyridoxal + ATP = pyridoxal 5'-phosphate + ADP + H(+). Its function is as follows. Required for synthesis of pyridoxal-5-phosphate from vitamin B6. The polypeptide is Putative pyridoxal kinase C18.10 (Schizosaccharomyces pombe (strain 972 / ATCC 24843) (Fission yeast)).